The sequence spans 729 residues: Phosphoribosylformylglycinamidine synthase subunit PurL (729 aa).

The active site involves His-54. Tyr-57 and Lys-96 together coordinate ATP. Glu-98 provides a ligand contact to Mg(2+). Substrate-binding positions include 99–102 (SHNH) and Arg-121. His-100 functions as the Proton acceptor in the catalytic mechanism. Asp-122 lines the Mg(2+) pocket. Position 245 (Gln-245) interacts with substrate. Residue Asp-273 coordinates Mg(2+). Position 317 to 319 (317 to 319 (ETQ)) interacts with substrate. Positions 495 and 532 each coordinate ATP. Residue Asn-533 participates in Mg(2+) binding. Ser-535 lines the substrate pocket.

It belongs to the FGAMS family. Monomer. Part of the FGAM synthase complex composed of 1 PurL, 1 PurQ and 2 PurS subunits.

It localises to the cytoplasm. The enzyme catalyses N(2)-formyl-N(1)-(5-phospho-beta-D-ribosyl)glycinamide + L-glutamine + ATP + H2O = 2-formamido-N(1)-(5-O-phospho-beta-D-ribosyl)acetamidine + L-glutamate + ADP + phosphate + H(+). It functions in the pathway purine metabolism; IMP biosynthesis via de novo pathway; 5-amino-1-(5-phospho-D-ribosyl)imidazole from N(2)-formyl-N(1)-(5-phospho-D-ribosyl)glycinamide: step 1/2. In terms of biological role, part of the phosphoribosylformylglycinamidine synthase complex involved in the purines biosynthetic pathway. Catalyzes the ATP-dependent conversion of formylglycinamide ribonucleotide (FGAR) and glutamine to yield formylglycinamidine ribonucleotide (FGAM) and glutamate. The FGAM synthase complex is composed of three subunits. PurQ produces an ammonia molecule by converting glutamine to glutamate. PurL transfers the ammonia molecule to FGAR to form FGAM in an ATP-dependent manner. PurS interacts with PurQ and PurL and is thought to assist in the transfer of the ammonia molecule from PurQ to PurL. The sequence is that of Phosphoribosylformylglycinamidine synthase subunit PurL from Staphylococcus aureus (strain Mu3 / ATCC 700698).